The following is a 487-amino-acid chain: Fibroblast growth factor receptor-like 1 (487 aa).

The signal sequence occupies residues 1-18 (MGLQLALLLAGIVALSDS). The Extracellular segment spans residues 19–371 (ARGPPRIADK…PSSVSSLPWP (353 aa)). An Ig-like C2-type 1 domain is found at 23 to 109 (PRIADKVIHR…GSTNVNYTLI (87 aa)). A disulfide bond links C45 and C93. A glycan (N-linked (GlcNAc...) asparagine) is linked at N105. The span at 115–125 (SSGKNSQTPEG) shows a compositional bias: polar residues. Positions 115-147 (SSGKNSQTPEGSNGEYEDHSGKQWAQPRFTQPA) are disordered. 2 consecutive Ig-like C2-type domains span residues 141–231 (PRFT…YKVE) and 240–348 (PILT…AFLT). A disulfide bridge links C166 with C215. Residues N225, N249, and N287 are each glycosylated (N-linked (GlcNAc...) asparagine). A disulfide bond links C262 and C332. Residues 372–392 (VIIGIPAGAVFIFGTILLWLC) form a helical membrane-spanning segment. Topologically, residues 393–487 (QTKKKPCSPP…HQHQHIQYQC (95 aa)) are cytoplasmic.

In terms of assembly, interacts with heparin and FGF2. Expressed in cartilaginous structures.

The protein localises to the cell membrane. Its function is as follows. Has a negative effect on cell proliferation. In Gallus gallus (Chicken), this protein is Fibroblast growth factor receptor-like 1 (FGFRL1).